We begin with the raw amino-acid sequence, 108 residues long: Phosphoribosyl-AMP cyclohydrolase (108 aa).

D73 contacts Mg(2+). C74 contributes to the Zn(2+) binding site. The Mg(2+) site is built by D75 and D77. 2 residues coordinate Zn(2+): C90 and C97.

The protein belongs to the PRA-CH family. Homodimer. Requires Mg(2+) as cofactor. It depends on Zn(2+) as a cofactor.

The protein localises to the cytoplasm. It catalyses the reaction 1-(5-phospho-beta-D-ribosyl)-5'-AMP + H2O = 1-(5-phospho-beta-D-ribosyl)-5-[(5-phospho-beta-D-ribosylamino)methylideneamino]imidazole-4-carboxamide. The protein operates within amino-acid biosynthesis; L-histidine biosynthesis; L-histidine from 5-phospho-alpha-D-ribose 1-diphosphate: step 3/9. Catalyzes the hydrolysis of the adenine ring of phosphoribosyl-AMP. This chain is Phosphoribosyl-AMP cyclohydrolase, found in Lactiplantibacillus plantarum (strain ATCC BAA-793 / NCIMB 8826 / WCFS1) (Lactobacillus plantarum).